The chain runs to 258 residues: tRNA pseudouridine synthase A (258 aa).

Residue Asp55 is the Nucleophile of the active site. Tyr113 is a binding site for substrate.

This sequence belongs to the tRNA pseudouridine synthase TruA family. Homodimer.

The enzyme catalyses uridine(38/39/40) in tRNA = pseudouridine(38/39/40) in tRNA. Its function is as follows. Formation of pseudouridine at positions 38, 39 and 40 in the anticodon stem and loop of transfer RNAs. The polypeptide is tRNA pseudouridine synthase A (Limosilactobacillus fermentum (strain NBRC 3956 / LMG 18251) (Lactobacillus fermentum)).